Here is a 568-residue protein sequence, read N- to C-terminus: Potassium-transporting ATPase potassium-binding subunit (568 aa).

Transmembrane regions (helical) follow at residues 3 to 23 (TEIL…YPLG), 64 to 84 (FLKA…VLLV), 133 to 153 (FVIM…MAGI), 179 to 199 (ILLP…TPMG), 255 to 275 (MVEC…LGFY), 281 to 301 (LAYS…CINV), 375 to 395 (FGGV…AVFI), 418 to 438 (IATI…AISS), 497 to 517 (IVLI…AGLL), and 536 to 556 (TFGI…FFPV).

It belongs to the KdpA family. As to quaternary structure, the system is composed of three essential subunits: KdpA, KdpB and KdpC.

The protein resides in the cell inner membrane. Functionally, part of the high-affinity ATP-driven potassium transport (or Kdp) system, which catalyzes the hydrolysis of ATP coupled with the electrogenic transport of potassium into the cytoplasm. This subunit binds the periplasmic potassium ions and delivers the ions to the membrane domain of KdpB through an intramembrane tunnel. The chain is Potassium-transporting ATPase potassium-binding subunit from Bacteroides thetaiotaomicron (strain ATCC 29148 / DSM 2079 / JCM 5827 / CCUG 10774 / NCTC 10582 / VPI-5482 / E50).